Reading from the N-terminus, the 1905-residue chain is Microtubule cross-linking factor 1 (1905 aa).

The segment at 1-249 is necessary for colocalization and binding with microtubules; that stretch reads METLNGPAGG…SSDREPPRGA (249 aa). The segment at 1-329 is disordered; sequence METLNGPAGG…SLGEQSRLVP (329 aa). Residues 1–508 are necessary for self-assembly, microtubule bundling activity and apicobasal microtubule organization; it reads METLNGPAGG…QDDSADLRCQ (508 aa). The segment covering 22–40 has biased composition (basic residues); it reads QHHRHHHLHPVAERRRLHR. Composition is skewed to low complexity over residues 63 to 95 and 115 to 130; these read VPSS…AAPG and AGAR…LGSR. 2 positions are modified to phosphoserine: Ser-77 and Ser-87. 3 positions are modified to phosphoserine: Ser-217, Ser-221, and Ser-263. Low complexity predominate over residues 268–283; sequence ALLAAPLAAGACPGGR. Coiled coils occupy residues 330–404, 432–483, and 513–718; these read AAEE…EQKS, SVRL…SSLK, and KEEA…LQHE. Disordered regions lie at residues 544–563, 601–631, 671–694, 737–800, and 842–867; these read YGDV…PSTR, DMRG…LESS, FEPP…GAPL, LRAP…SEPC, and AGLR…GDQQ. Ser-549 is modified (phosphoserine). A compositionally biased stretch (basic and acidic residues) spans 601-616; sequence DMRGQQEREGPGRDHA. Ser-618 carries the post-translational modification Phosphoserine. Thr-621 bears the Phosphothreonine mark. Positions 680 to 692 are enriched in gly residues; that stretch reads LGEGASPGAGGGA. Ser-685 is subject to Phosphoserine. Positions 741–770 are enriched in basic and acidic residues; the sequence is SPRDSDAESDAGKKESDGEESRLPQPKREG. A Phosphoserine modification is found at Ser-776. A compositionally biased stretch (acidic residues) spans 857 to 866; sequence GEEEQGEGDQ. 4 positions are modified to phosphoserine: Ser-901, Ser-923, Lys-941, and Thr-975. The tract at residues 1080–1100 is disordered; sequence GVQGGHQADGPDHDSDRGCGF. Coiled-coil stretches lie at residues 1143 to 1201 and 1238 to 1278; these read KALL…ELGS and EKNW…KENS. A necessary for interaction with MARK2 and apicobasal microtubule bundle formation in polarized epithelial cells region spans residues 1265 to 1382; that stretch reads EFLWRIEQLQ…EENHKGNLQR (118 aa). Position 1278 is a phosphoserine (Ser-1278). Positions 1346-1384 are disordered; that stretch reads ALSLDDEPEEPPAHRPEREFRNRLPEEEENHKGNLQRAV. A compositionally biased stretch (basic and acidic residues) spans 1356–1377; the sequence is PPAHRPEREFRNRLPEEEENHK. A phosphoserine mark is found at Ser-1385, Ser-1388, and Ser-1399. At Thr-1417 the chain carries Phosphothreonine. The residue at position 1421 (Ser-1421) is a Phosphoserine. Tyr-1427 carries the post-translational modification Phosphotyrosine. The disordered stretch occupies residues 1485–1505; that stretch reads DTMTSPEHCQKQPLRSHVLTE. A phosphoserine mark is found at Ser-1514, Ser-1523, Ser-1561, Ser-1578, Ser-1583, Ser-1592, and Ser-1661. A disordered region spans residues 1524-1569; that stretch reads ITAAGGEGPFPTSRARGSPGDTKGGPPEPMLSRWPCTSPRHSRDYV. Disordered stretches follow at residues 1655–1689, 1707–1756, 1782–1842, and 1863–1905; these read GSGV…SRQV, PKYG…PVHT, GLRA…APPG, and KEER…PWGL. Thr-1667 and Thr-1675 each carry phosphothreonine. Over residues 1678 to 1687 the composition is skewed to low complexity; that stretch reads SSPSRSLRSR. The interval 1678 to 1773 is necessary for colocalization and binding with microtubules; it reads SSPSRSLRSR…SLFNIIDHSP (96 aa). Ser-1679 and Ser-1683 each carry phosphoserine. A compositionally biased stretch (polar residues) spans 1744–1756; that stretch reads ARSTTTRESPVHT. Residues Ser-1791, Ser-1808, Ser-1812, and Ser-1814 each carry the phosphoserine modification.

This sequence belongs to the SOGA family. Homodimer. Associates (via N- and C-terminus domains) with microtubule filaments. In terms of assembly, interacts with MARK2; the interaction is direct. Phosphorylated during mitosis in a CDK1-dependent manner.

The protein resides in the lateral cell membrane. The protein localises to the apical cell membrane. Its subcellular location is the cytoplasm. It is found in the cytoskeleton. It localises to the spindle pole. The protein resides in the midbody. Microtubule-associated factor involved in the late phase of epithelial polarization and microtubule dynamics regulation. Plays a role in the development and maintenance of non-centrosomal microtubule bundles at the lateral membrane in polarized epithelial cells. Required for faithful chromosome segregation during mitosis. In Homo sapiens (Human), this protein is Microtubule cross-linking factor 1 (MTCL1).